A 387-amino-acid chain; its full sequence is 8-amino-7-oxononanoate synthase (387 aa).

109 to 110 (GY) is a binding site for pyridoxal 5'-phosphate. His134 lines the substrate pocket. The pyridoxal 5'-phosphate site is built by Ser182, His214, and Thr242. Residue Lys245 is modified to N6-(pyridoxal phosphate)lysine. Thr359 serves as a coordination point for substrate.

This sequence belongs to the class-II pyridoxal-phosphate-dependent aminotransferase family. BioF subfamily. As to quaternary structure, homodimer. Pyridoxal 5'-phosphate is required as a cofactor.

The catalysed reaction is 6-carboxyhexanoyl-[ACP] + L-alanine + H(+) = (8S)-8-amino-7-oxononanoate + holo-[ACP] + CO2. Its pathway is cofactor biosynthesis; biotin biosynthesis. Catalyzes the decarboxylative condensation of pimeloyl-[acyl-carrier protein] and L-alanine to produce 8-amino-7-oxononanoate (AON), [acyl-carrier protein], and carbon dioxide. The chain is 8-amino-7-oxononanoate synthase from Haemophilus ducreyi (strain 35000HP / ATCC 700724).